A 161-amino-acid chain; its full sequence is 2-C-methyl-D-erythritol 2,4-cyclodiphosphate synthase (161 aa).

A divalent metal cation-binding residues include Asp10 and His12. 4-CDP-2-C-methyl-D-erythritol 2-phosphate is bound by residues 10 to 12 (DVH) and 36 to 37 (HS). Position 44 (His44) interacts with a divalent metal cation. Residues 58 to 60 (DIG), 63 to 67 (FSDTD), and Arg144 contribute to the 4-CDP-2-C-methyl-D-erythritol 2-phosphate site.

This sequence belongs to the IspF family. Homotrimer. It depends on a divalent metal cation as a cofactor.

It carries out the reaction 4-CDP-2-C-methyl-D-erythritol 2-phosphate = 2-C-methyl-D-erythritol 2,4-cyclic diphosphate + CMP. The protein operates within isoprenoid biosynthesis; isopentenyl diphosphate biosynthesis via DXP pathway; isopentenyl diphosphate from 1-deoxy-D-xylulose 5-phosphate: step 4/6. Involved in the biosynthesis of isopentenyl diphosphate (IPP) and dimethylallyl diphosphate (DMAPP), two major building blocks of isoprenoid compounds. Catalyzes the conversion of 4-diphosphocytidyl-2-C-methyl-D-erythritol 2-phosphate (CDP-ME2P) to 2-C-methyl-D-erythritol 2,4-cyclodiphosphate (ME-CPP) with a corresponding release of cytidine 5-monophosphate (CMP). The chain is 2-C-methyl-D-erythritol 2,4-cyclodiphosphate synthase from Burkholderia ambifaria (strain MC40-6).